A 417-amino-acid chain; its full sequence is Mitochondrial inner membrane i-AAA protease supercomplex subunit MGR1 (417 aa).

The interval 1-28 (MAVFTPPSGNSNSTDHTHTQDDHDKDDN) is disordered. Topologically, residues 1 to 56 (MAVFTPPSGNSNSTDHTHTQDDHDKDDNDIKKFYIRPSLGLKLWGPLVPAPDNLPG) are mitochondrial intermembrane. A compositionally biased stretch (basic and acidic residues) spans 15-28 (DHTHTQDDHDKDDN). The helical transmembrane segment at 57 to 73 (LYTLITIQSAVGFFALW) threads the bilayer. Over 74-151 (RLRRLYKLPP…RQSRFVSVRK (78 aa)) the chain is Mitochondrial matrix. A helical membrane pass occupies residues 152–169 (LLWGLFGSLLLSQSLLEL). Residues 170 to 417 (TRLNFLKYDP…PKALTNEKTH (248 aa)) lie on the Mitochondrial intermembrane side of the membrane. Residues 391–401 (SHTKTPTSTDQ) show a composition bias toward polar residues. The segment at 391 to 417 (SHTKTPTSTDQPLPGPTPKALTNEKTH) is disordered.

The protein belongs to the MGR1 family. As to quaternary structure, component of the mitochondrial inner membrane i-AAA protease supercomplex composed of MGR1, MGR3 and YME1. With MGR3, forms a subcomplex that binds to YME1 and to substrates to facilitate proteolysis. Interacts directly with YME1.

The protein localises to the mitochondrion inner membrane. Its function is as follows. Component of the mitochondrial inner membrane i-AAA protease supercomplex required for mitochondrial inner membrane protein turnover. Together with MGR3, functions in an adapter complex that targets substrates to the i-AAA protease for degradation. Required for growth of cells lacking the mitochondrial genome. The sequence is that of Mitochondrial inner membrane i-AAA protease supercomplex subunit MGR1 (MGR1) from Saccharomyces cerevisiae (strain ATCC 204508 / S288c) (Baker's yeast).